The sequence spans 557 residues: Prosaposin (557 aa).

Positions 1 to 16 are cleaved as a signal peptide; sequence MYALALFASLLATALT. A propeptide spanning residues 17–59 is cleaved from the precursor; the sequence is SPVQDPKTCSGGSAVLCRDVKTAVDCGAVKHCQQMVWSKPTAK. Residues 18–58 form the Saposin A-type 1 domain; it reads PVQDPKTCSGGSAVLCRDVKTAVDCGAVKHCQQMVWSKPTA. 4 consecutive Saposin B-type domains span residues 59–142, 193–277, 313–394, and 438–519; these read KSLP…QSLQ, NEDV…NEVK, NVIL…AARP, and NGGF…PSAY. Cystine bridges form between C63/C138, C66/C132, and C94/C106. N-linked (GlcNAc...) asparagine glycosylation is present at N80. Residues 143 to 193 constitute a propeptide that is removed on maturation; sequence EYLAEQNQKQLESNKIPEVDMARVVAPFMSNIPLLLYPQDHPRSQPQPKAN. Disulfide bonds link C197-C273, C200-C267, and C229-C240. N-linked (GlcNAc...) asparagine glycosylation is present at N214. The propeptide occupies 277 to 312; it reads KRVPMKTLVPATETIKNILPALEMMDPYEQNLVQAH. Intrachain disulfides connect C317/C390, C320/C384, and C348/C359. N-linked (GlcNAc...) asparagine glycosylation occurs at N334. A propeptide spanning residues 393–437 is cleaved from the precursor; the sequence is RPELVEALEQPAPAIVSALLKEPTPPKQPAQPKQSALPAHVPPQK. Intrachain disulfides connect C442/C515, C445/C509, and C473/C484. N459 is a glycosylation site (N-linked (GlcNAc...) asparagine). The propeptide occupies 520 to 557; that stretch reads KLLLGTEKCVWGPSYWCQNMETAARCNAVDHCKRHVWN. The Saposin A-type 2 domain maps to 521 to 557; the sequence is LLLGTEKCVWGPSYWCQNMETAARCNAVDHCKRHVWN.

Saposin-B is a homodimer. Prosaposin exists as a roughly half-half mixture of monomers and disulfide-linked dimers. Monomeric prosaposin interacts (via C-terminus) with sortilin/SORT1, the interaction is required for targeting to lysosomes. Interacts with GRN; facilitates lysosomal delivery of progranulin from the extracellular space and the biosynthetic pathway.

It localises to the secreted. Its subcellular location is the lysosome. In terms of biological role, behaves as a myelinotrophic and neurotrophic factor, these effects are mediated by its G-protein-coupled receptors, GPR37 and GPR37L1, undergoing ligand-mediated internalization followed by ERK phosphorylation signaling. Saposin-A and saposin-C stimulate the hydrolysis of glucosylceramide by beta-glucosylceramidase (EC 3.2.1.45) and galactosylceramide by beta-galactosylceramidase (EC 3.2.1.46). Saposin-C apparently acts by combining with the enzyme and acidic lipid to form an activated complex, rather than by solubilizing the substrate. Its function is as follows. Saposin-B stimulates the hydrolysis of galacto-cerebroside sulfate by arylsulfatase A (EC 3.1.6.8), GM1 gangliosides by beta-galactosidase (EC 3.2.1.23) and globotriaosylceramide by alpha-galactosidase A (EC 3.2.1.22). Saposin-B forms a solubilizing complex with the substrates of the sphingolipid hydrolases. Functionally, saposin-D is a specific sphingomyelin phosphodiesterase activator (EC 3.1.4.12). In terms of biological role, saposins are specific low-molecular mass non-enzymatic proteins, they participate in the lysosomal degradation of sphingolipids, which takes place by the sequential action of specific hydrolases. This chain is Prosaposin (Psap), found in Mus musculus (Mouse).